A 212-amino-acid chain; its full sequence is Adenylate kinase (212 aa).

Gly10–Thr15 serves as a coordination point for ATP. The NMP stretch occupies residues Ala30–Val59. AMP is bound by residues Arg36, Glu57–Val59, Gly85–Arg88, and Gln92. An LID region spans residues Gly122–Asp160. ATP is bound at residue Arg123. Zn(2+)-binding residues include Cys126 and Cys129. Ile132–Tyr133 serves as a coordination point for ATP. Zn(2+) contacts are provided by Cys146 and Cys149. AMP is bound by residues Arg157 and Arg168. Lys196 contributes to the ATP binding site.

It belongs to the adenylate kinase family. Monomer.

It is found in the cytoplasm. It carries out the reaction AMP + ATP = 2 ADP. Its pathway is purine metabolism; AMP biosynthesis via salvage pathway; AMP from ADP: step 1/1. Catalyzes the reversible transfer of the terminal phosphate group between ATP and AMP. Plays an important role in cellular energy homeostasis and in adenine nucleotide metabolism. The polypeptide is Adenylate kinase (Rickettsia akari (strain Hartford)).